The sequence spans 536 residues: Arylsulfatase K (536 aa).

The N-terminal stretch at 1–22 (MLLLWVSVVAALALAVLAPGAG) is a signal peptide. Ca(2+)-binding residues include Asp40 and Cys80. The active-site Nucleophile is the Cys80. A 3-oxoalanine (Cys) modification is found at Cys80. The N-linked (GlcNAc...) asparagine glycan is linked to Asn108. Residue Lys128 coordinates substrate. Residues Asn166 and Asn193 are each glycosylated (N-linked (GlcNAc...) asparagine). Substrate is bound at residue His251. Asn262 is a glycosylation site (N-linked (GlcNAc...) asparagine). Ca(2+) is bound by residues Asp313 and His314. N-linked (GlcNAc...) asparagine glycosylation is found at Asn375, Asn413, and Asn498.

The protein belongs to the sulfatase family. Ca(2+) serves as cofactor. Post-translationally, the conversion to 3-oxoalanine (also known as C-formylglycine, FGly), of a serine or cysteine residue in prokaryotes and of a cysteine residue in eukaryotes, is critical for catalytic activity. In terms of processing, the 75-kDa precursor undergoes proteolytic processing to yield a 23 kDa form. N-glycosylated with both high mannose and complex type sugars. As to expression, expressed at high levels in the placenta and pancreas. Expressed at intermediate levels in the lung, brain, heart, liver and kidney and at low levels in the muscle.

Its subcellular location is the secreted. It is found in the lysosome. It catalyses the reaction an aryl sulfate + H2O = a phenol + sulfate + H(+). It carries out the reaction Hydrolysis of the 2-sulfate groups of the 2-O-sulfo-D-glucuronate residues of chondroitin sulfate, heparin and heparitin sulfate.. In terms of biological role, catalyzes the hydrolysis of pseudosubstrates such as p-nitrocatechol sulfate and p-nitrophenyl sulfate. Catalyzes the hydrolysis of the 2-sulfate groups of the 2-O-sulfo-D-glucuronate residues of chondroitin sulfate, heparin and heparitin sulfate. Acts selectively on 2-sulfoglucuronate and lacks activity against 2-sulfoiduronate. The chain is Arylsulfatase K (ARSK) from Homo sapiens (Human).